A 142-amino-acid polypeptide reads, in one-letter code: Antirestriction protein KlcA (142 aa).

Belongs to the antirestriction protein family.

Its function is as follows. Could be involved in overcoming restriction barriers during establishment after conjugative transfer. The chain is Antirestriction protein KlcA (klcA) from Escherichia coli.